The chain runs to 159 residues: Putative esterase DR_2406 (159 aa).

The protein belongs to the thioesterase PaaI family.

This Deinococcus radiodurans (strain ATCC 13939 / DSM 20539 / JCM 16871 / CCUG 27074 / LMG 4051 / NBRC 15346 / NCIMB 9279 / VKM B-1422 / R1) protein is Putative esterase DR_2406.